The primary structure comprises 158 residues: Glutathione peroxidase homolog BsaA (158 aa).

Thr36 is an active-site residue.

It belongs to the glutathione peroxidase family.

This Staphylococcus epidermidis (strain ATCC 35984 / DSM 28319 / BCRC 17069 / CCUG 31568 / BM 3577 / RP62A) protein is Glutathione peroxidase homolog BsaA (bsaA).